Reading from the N-terminus, the 121-residue chain is Non-specific lipid-transfer protein 9 (121 aa).

Positions 1 to 27 (MRKSISIAFVIAITIFMSHLNVFTVYS) are cleaved as a signal peptide. Disulfide bonds link Cys-31-Cys-80, Cys-41-Cys-57, Cys-58-Cys-102, and Cys-78-Cys-116.

The protein belongs to the plant LTP family.

In terms of biological role, plant non-specific lipid-transfer proteins transfer phospholipids as well as galactolipids across membranes. May play a role in wax or cutin deposition in the cell walls of expanding epidermal cells and certain secretory tissues. This is Non-specific lipid-transfer protein 9 (LTP9) from Arabidopsis thaliana (Mouse-ear cress).